Reading from the N-terminus, the 782-residue chain is MVKFSKELEAQLIPEWKEAFVNYCLLKKQIKKIKTSRKPKPASHYPIGHHSDFGRSLFDPVRKLARTFSDKLFSNSEKPEILQVRRRRGSSETGDDVDEIYQTELVQLFSEEDEVKVFFARLDEELNKVNQFHKPKETEFLERGEILKKQLETLAELKQILSDRKKRNLSGSNSHRSFSSSVRNSDFSAGSPGELSEIQSETSRTDEIIEALERNGVSFINSATRSKTKGGKPKMSLRVDIPDAVAGAEGGIARSIATAMSVLWEELVNNPRSDFTNWKNIQSAEKKIRSAFVELYRGLGLLKTYSSLNMIAFTKIMKKFDKVAGQNASSTYLKVVKRSQFISSDKVVRLMDEVESIFTKHFANNDRKKAMKFLKPHQTKDSHMVTFFVGLFTGCFISLFVIYIILAHLSGIFTSSDQVSYLETVYPVFSVFALLSLHMFMYGCNLYMWKNTRINYTFIFEFAPNTALRYRDAFLMGTTFMTSVVAAMVIHLILRASGFSASQVDTIPGILLLIFICVLICPFNTFYRPTRFCFIRILRKIVCSPFYKVLMVDFFMGDQLTSQIPLLRHLETTGCYFLAQSFKTHEYNTCKNGRYYREFAYLISFLPYFWRAMQCVRRWWDESNPDHLINMGKYVSAMVAAGVRITYARENNDLWLTMVLVSSVVATIYQLYWDFVKDWGLLNPKSKNPWLRDNLVLRNKNFYYLSIALNLVLRVAWIETIMRFRVSPVQSHLLDFFLASLEVIRRGHWNFYRVENEHLNNVGQFRAVKTVPLPFLDRDSDG.

Topologically, residues 1 to 386 (MVKFSKELEA…HQTKDSHMVT (386 aa)) are cytoplasmic. The 333-residue stretch at 2 to 334 (VKFSKELEAQ…GQNASSTYLK (333 aa)) folds into the SPX domain. Residues 165–202 (KKRNLSGSNSHRSFSSSVRNSDFSAGSPGELSEIQSET) form a disordered region. The span at 170 to 188 (SGSNSHRSFSSSVRNSDFS) shows a compositional bias: low complexity. The segment at 315–322 (KIMKKFDK) is important for inositol polyphosphate binding. Residues 387–407 (FFVGLFTGCFISLFVIYIILA) traverse the membrane as a helical segment. The Lumenal portion of the chain corresponds to 408 to 423 (HLSGIFTSSDQVSYLE). A helical transmembrane segment spans residues 424–444 (TVYPVFSVFALLSLHMFMYGC). The Cytoplasmic segment spans residues 445 to 473 (NLYMWKNTRINYTFIFEFAPNTALRYRDA). A helical transmembrane segment spans residues 474–494 (FLMGTTFMTSVVAAMVIHLIL). Over 495–506 (RASGFSASQVDT) the chain is Lumenal. The helical transmembrane segment at 507-527 (IPGILLLIFICVLICPFNTFY) threads the bilayer. At 528–593 (RPTRFCFIRI…THEYNTCKNG (66 aa)) the chain is on the cytoplasmic side. In terms of domain architecture, EXS spans 591 to 782 (KNGRYYREFA…LPFLDRDSDG (192 aa)). Residues 594–614 (RYYREFAYLISFLPYFWRAMQ) traverse the membrane as a helical segment. Residues 615 to 619 (CVRRW) lie on the Lumenal side of the membrane. A helical transmembrane segment spans residues 620–639 (WDESNPDHLINMGKYVSAMV). Residues 640–782 (AAGVRITYAR…LPFLDRDSDG (143 aa)) are Cytoplasmic-facing.

It belongs to the SYG1 (TC 2.A.94) family. In terms of assembly, interacts with PHO2. PHO1 degradation is PHO2 dependent and involves multivesicular body-mediated vacuolar proteolysis. As to expression, predominantly in roots, but also weak expression in the lower part of the hypocotyl. In the stellar cells, including the pericycle and xylem parenchyma cells, but not in the cortical or epidermal cells. Expressed in guard cells.

It is found in the golgi apparatus membrane. Its subcellular location is the golgi apparatus. The protein resides in the trans-Golgi network membrane. The protein localises to the endoplasmic reticulum membrane. In terms of biological role, inositol polyphosphate sensor that associates with transcription factors to regulate inorganic phosphate (Pi) starvation responses. Probably acts by binding inositol polyphosphate via its SPX domain. Acts as a Pi exporter, mediating efflux of Pi out of cells. Transfers Pi from the epidermal and cortical cells to the root xylem vessels. Involved in the transfer of Pi from roots to shoots. Involved in abscisic acid (ABA) induction of stomatal closure and ABA repression of stomatal opening. The protein is Phosphate transporter PHO1 of Arabidopsis thaliana (Mouse-ear cress).